We begin with the raw amino-acid sequence, 901 residues long: Protein translocase subunit SecA (901 aa).

ATP contacts are provided by residues Gln87, 105–109 (GEGKT), and Asp512. Zn(2+) is bound by residues Cys885, Cys887, Cys896, and His897.

Belongs to the SecA family. Monomer and homodimer. Part of the essential Sec protein translocation apparatus which comprises SecA, SecYEG and auxiliary proteins SecDF-YajC and YidC. Zn(2+) serves as cofactor.

It localises to the cell inner membrane. The protein localises to the cytoplasm. It catalyses the reaction ATP + H2O + cellular proteinSide 1 = ADP + phosphate + cellular proteinSide 2.. Its function is as follows. Part of the Sec protein translocase complex. Interacts with the SecYEG preprotein conducting channel. Has a central role in coupling the hydrolysis of ATP to the transfer of proteins into and across the cell membrane, serving both as a receptor for the preprotein-SecB complex and as an ATP-driven molecular motor driving the stepwise translocation of polypeptide chains across the membrane. The sequence is that of Protein translocase subunit SecA from Salmonella typhi.